The following is a 142-amino-acid chain: Mitochondrial import inner membrane translocase subunit TIM22-4 (142 aa).

Transmembrane regions (helical) follow at residues Val21–Leu41, Ser70–Val88, Thr97–Ala113, and Ala120–Phe137.

Belongs to the Tim17/Tim22/Tim23 family.

It localises to the mitochondrion inner membrane. Its function is as follows. Essential core component of the TIM22 complex, a complex that mediates the import and insertion of multi-pass transmembrane proteins into the mitochondrial inner membrane. This chain is Mitochondrial import inner membrane translocase subunit TIM22-4 (TIM22-4), found in Arabidopsis thaliana (Mouse-ear cress).